The primary structure comprises 629 residues: Chaperone protein HtpG (629 aa).

The tract at residues 1–337 (MAASKETMQF…SSDLPLNVSR (337 aa)) is a; substrate-binding. A b region spans residues 338–554 (EILQGNRVID…ERDMALYMQQ (217 aa)). The tract at residues 555-629 (LLKQAGHEIS…INQLMLALAG (75 aa)) is c.

Belongs to the heat shock protein 90 family. Homodimer.

The protein localises to the cytoplasm. Its function is as follows. Molecular chaperone. Has ATPase activity. This chain is Chaperone protein HtpG, found in Acidithiobacillus ferrooxidans (strain ATCC 23270 / DSM 14882 / CIP 104768 / NCIMB 8455) (Ferrobacillus ferrooxidans (strain ATCC 23270)).